A 997-amino-acid polypeptide reads, in one-letter code: Synaptonemal complex protein 1 (997 aa).

Positions 102–112 (PMSRLYSKLYK) match the Mediates head to head self-assembly of N-terminal ends motif. Residues 118–121 (KKWK) carry the Nuclear localization signal motif. Coiled coils occupy residues 121 to 176 (KVSI…LIKE) and 212 to 696 (YVDL…KKIS). Residues 207 to 363 (ETRQVYVDLN…YQLTEEKEAQ (157 aa)) form an interaction with SYCE3 region. Residues 698–792 (EKLLGEVEKA…VSLKKQLEVE (95 aa)) are required for pH-induced assembly of C-terminal ends into antiparallel tetramers. A Nuclear localization signal motif is present at residues 701 to 704 (LGEV). Residues 768–806 (KVALETELSNIRNELVSLKKQLEVEKEEKEKLKMEQENT) adopt a coiled-coil conformation. Positions 805 to 997 (NTAILTDKKD…RLKEAEKLFT (193 aa)) are DNA-binding. At S824 the chain carries Phosphoserine. A disordered region spans residues 828–863 (TSWKFDSKTTPSQNISRLSSSMDSGKSKDNRDSLRA). Residues 835 to 851 (KTTPSQNISRLSSSMDS) are compositionally biased toward polar residues. Residues 852–861 (GKSKDNRDSL) show a composition bias toward basic and acidic residues. A Nuclear localization signal motif is present at residues 902 to 905 (KKRK). Residue T940 is modified to Phosphothreonine.

As to quaternary structure, structural component of synaptonemal complexes. Homotetramer that consists of an N-terminal four-helical bundle that bifurcates into two elongated C-terminal dimeric coiled coils. This tetrameric building block potentially self-assembles into a supramolecular zipper-like lattice to mediate meiotic chromosome synapsis. Self-assembly is likely initiated by local proton density at chromosome axis, which is predicted to trigger antiparallel back to back assembly of adjacent C-terminal ends into tetrameric structures that anchor to chromosomal DNA. Then the N-terminal ends are predicted to undergo cooperative antiparallel head to head assembly at the midline of synaptonemal complexes central element to form a zipper-like lattice between properly aligned homologous chromosomes. The nascent synapsis generated by SYCP1 is stabilized through interaction with central element proteins SYCE1 and SYCE2. Interacts (via tetrameric core) with SYCE3; the interaction remodels SYCP1 homotetramers to 2:1 heterotrimers with SYCE3. SYCP1/SYCE3 heterotrimers form lattice assemblies as part of the mature synaptonemal complex via both lateral and head-to-head interactions. Forms a complex with EWSR1, PRDM9, SYCP3 and REC8; complex formation is dependent of phosphorylated form of REC8 and requires PRDM9 bound to hotspot DNA; EWSR1 joins PRDM9 with the chromosomal axis through REC8. Interacts with SPO16. In terms of tissue distribution, testis.

The protein localises to the nucleus. The protein resides in the chromosome. It is found in the centromere. Major component of the transverse filaments of synaptonemal complexes, formed between homologous chromosomes during meiotic prophase. Required for normal assembly of the central element of the synaptonemal complexes. Required for normal centromere pairing during meiosis. Required for normal meiotic chromosome synapsis during oocyte and spermatocyte development and for normal male and female fertility. The polypeptide is Synaptonemal complex protein 1 (Rattus norvegicus (Rat)).